Here is a 185-residue protein sequence, read N- to C-terminus: MKQLLDFIPLILFFITYKLGGVREAAIVLVVATILQIVILKWKYGIVEKQQKIMASAVVFFGLLTAYFNEIRYLQWKVTIINGLFAIVLLVAQFQFKTPLIKKLLGKELQLPEKAWNTLNLGWALFFIICMLVNIYISHNMSEEAWVDFKSFGIIGMTVIATIISGVYIYRYLPKDGSNSKDGEK.

5 consecutive transmembrane segments (helical) span residues 27 to 47 (IVLVVATILQIVILKWKYGIV), 53 to 73 (IMASAVVFFGLLTAYFNEIRY), 76 to 96 (WKVTIINGLFAIVLLVAQFQF), 118 to 138 (TLNLGWALFFIICMLVNIYIS), and 149 to 169 (FKSFGIIGMTVIATIISGVYI).

The protein belongs to the YciB family.

It is found in the cell inner membrane. Functionally, plays a role in cell envelope biogenesis, maintenance of cell envelope integrity and membrane homeostasis. The sequence is that of Inner membrane-spanning protein YciB from Haemophilus influenzae (strain 86-028NP).